Here is a 113-residue protein sequence, read N- to C-terminus: U11-theraphotoxin-Hhn1a (113 aa).

Positions Met-1–Ala-21 are cleaved as a signal peptide. Residues Asp-22 to Arg-74 constitute a propeptide that is removed on maturation. The segment at Glu-61–Asp-83 is disordered. 3 cysteine pairs are disulfide-bonded: Cys-75/Cys-90, Cys-82/Cys-95, and Cys-89/Cys-110.

It belongs to the neurotoxin 14 (magi-1) family. 01 (HNTX-16) subfamily. In terms of tissue distribution, expressed by the venom gland.

It localises to the secreted. This is U11-theraphotoxin-Hhn1a from Cyriopagopus hainanus (Chinese bird spider).